Consider the following 103-residue polypeptide: Large ribosomal subunit protein bL21 (103 aa).

The protein belongs to the bacterial ribosomal protein bL21 family. Part of the 50S ribosomal subunit. Contacts protein L20.

Its function is as follows. This protein binds to 23S rRNA in the presence of protein L20. This chain is Large ribosomal subunit protein bL21, found in Acidithiobacillus ferrooxidans (strain ATCC 23270 / DSM 14882 / CIP 104768 / NCIMB 8455) (Ferrobacillus ferrooxidans (strain ATCC 23270)).